A 118-amino-acid chain; its full sequence is Ribonuclease P protein component 2 (118 aa).

It belongs to the eukaryotic/archaeal RNase P protein component 2 family. As to quaternary structure, consists of a catalytic RNA component and at least 4-5 protein subunits.

The protein localises to the cytoplasm. The enzyme catalyses Endonucleolytic cleavage of RNA, removing 5'-extranucleotides from tRNA precursor.. Functionally, part of ribonuclease P, a protein complex that generates mature tRNA molecules by cleaving their 5'-ends. The polypeptide is Ribonuclease P protein component 2 (Pyrococcus abyssi (strain GE5 / Orsay)).